The sequence spans 330 residues: MKKSFIHQQEEISFVKNTFTQYLIAKLDVVEVQGPILSRVGDGMQDNLSGVENPVSVHVLNIPNATFEVVHSLAKWKRHTLARFGFNEGEGLVVNMKALRPDEDSLDQTHSVYVDQWDWEKVIPDGQRNLAYLKETVETIYKVIRLTELAVEARYDIEAVLPKKITFIHTEELVARYPDLTPKERENAITKEFDAVFLIGIGGVLPDGKPHDGRAPDYDDWTSESENGYHGLNGDILVWNEQLGTAFELFSMGIRVDEEALKRQVDITGDQERLQFDWHKSLLNGLFPLTIGGGIGQSRMAMFLLRKKHIGEVQTSVWPQEVRDTYDNIL.

It belongs to the class-II aminoacyl-tRNA synthetase family. AsnA subfamily.

The protein localises to the cytoplasm. It catalyses the reaction L-aspartate + NH4(+) + ATP = L-asparagine + AMP + diphosphate + H(+). Its pathway is amino-acid biosynthesis; L-asparagine biosynthesis; L-asparagine from L-aspartate (ammonia route): step 1/1. In Streptococcus equi subsp. equi (strain 4047), this protein is Aspartate--ammonia ligase.